The sequence spans 641 residues: MIGRMVGLEPSSRSGVLEECRECRAIVMKGDGVQTPLHKGDSILGGEGACLMRYAAWTLISAVDVVYCSLETRESVSLTFNPDGQVIVVPFMFKGYNIAALPTTKFGDLKKDTKQIENVVSFLRSDICYAVWEFLVSSVQYKDDDRFERLFDERMRGYLRNISEGTSKVYMRGNKTFSELLEMVCGRMLECSGRVAGGGGIVRYGRDVMRMLDDMIENPPAGMSEEEKKVYLEDWRSAKEWGGFLYSIERWERIAEVEKIVCNACKEICLGLREEELLGLLAEGGMKKTLKEEFSEDKAKDARYLEYIVVDDVLLLDAHREYGGEVTKELVRQMLLGKEGKDIDKRYVDRVAGVVRERQRKREEETERSVKELVGDEEKAKSKEEKAKSKRGRKGKSASAPSEQEEEKKESEVEEAEQGGEVEALPVEVGGARSKGGKKKSKGGRKCFKIHRRVLRWTKSPEKIKEEWDKGSEERWKGRSLEEIKEQKIVHDITGVLELLRSEDADRFFMDAGKYRKGGSERQRMVAIGALETGGQRMTGVVEVGTFKDGDGCPVVYHLRFKPTSIGSIGDVINPGVVEASDVGRVDEGEECEDADKFVYPKGVRFETVKETGSFQIVWKNPSDTSEVLRRLIVYCRPCVI.

Basic and acidic residues predominate over residues 358-387 (RQRKREEETERSVKELVGDEEKAKSKEEKA). A disordered region spans residues 358 to 444 (RQRKREEETE…KGGKKKSKGG (87 aa)). The span at 435-444 (KGGKKKSKGG) shows a compositional bias: basic residues.

This sequence belongs to the UPF0329 family.

The polypeptide is UPF0329 protein ECU11_0030 (Encephalitozoon cuniculi (strain GB-M1) (Microsporidian parasite)).